Consider the following 380-residue polypeptide: Ubiquitin-like protein 7 (380 aa).

One can recognise a Ubiquitin-like domain in the interval 18–98; it reads TPKSILRLPE…VLRKSWPEPD (81 aa). A disordered region spans residues 200–313; it reads APMPGTDSSS…SSGVQSGTPI (114 aa). Residues 206–221 show a composition bias toward low complexity; sequence DSSSRSMPSSSYRDMP. Phosphoserine is present on serine 230. Composition is skewed to low complexity over residues 240 to 253 and 270 to 293; these read TRST…SSRP and SELA…TPGT. Residues 294–313 show a composition bias toward polar residues; that stretch reads QGHSSGTSPMSSGVQSGTPI. One can recognise a UBA domain in the interval 333–377; that stretch reads SLQSQWQPQLQQLRDMGIQDDELSLRALQATGGDIQAALELIFAG.

In terms of assembly, binds ubiquitin. Interacts with MAVS; this interaction enhances TRIM21-dependent 'Lys-27'-linked polyubiquitination of MAVS. Deubiquitinated by OTUD4 which stabilizes UBL7 expression. Ubiquitous. Highly expressed in heart, skeletal muscle, testis, thyroid and adrenal gland.

In terms of biological role, interferon-stimulated protein that positively regulates RNA virus-triggered innate immune signaling. Mechanistically, promotes 'Lys-27'-linked polyubiquitination of MAVS through TRIM21 leading to enhanced the IFN signaling pathway. This chain is Ubiquitin-like protein 7 (UBL7), found in Homo sapiens (Human).